Here is a 214-residue protein sequence, read N- to C-terminus: Peptide methionine sulfoxide reductase MsrA 2 (214 aa).

The active site involves Cys45.

It belongs to the MsrA Met sulfoxide reductase family.

It catalyses the reaction L-methionyl-[protein] + [thioredoxin]-disulfide + H2O = L-methionyl-(S)-S-oxide-[protein] + [thioredoxin]-dithiol. The enzyme catalyses [thioredoxin]-disulfide + L-methionine + H2O = L-methionine (S)-S-oxide + [thioredoxin]-dithiol. Functionally, has an important function as a repair enzyme for proteins that have been inactivated by oxidation. Catalyzes the reversible oxidation-reduction of methionine sulfoxide in proteins to methionine. In Synechocystis sp. (strain ATCC 27184 / PCC 6803 / Kazusa), this protein is Peptide methionine sulfoxide reductase MsrA 2 (msrA2).